Reading from the N-terminus, the 137-residue chain is Bombinin-like peptides 1 (137 aa).

The first 18 residues, 1-18, serve as a signal peptide directing secretion; it reads MNFKYIVAVSILIASAYA. Asparagine amide is present on Asn-70. The segment at 91 to 112 is disordered; it reads LDSFEHPEEASEKETRGFNQEE. D-allo-isoleucine is present on Ile-118. Ile-136 is subject to Isoleucine amide.

Belongs to the bombinin family. In terms of tissue distribution, expressed by the skin glands.

The protein resides in the secreted. Has antimicrobial activity, but no hemolytic activity. Preliminary evidence indicates that this peptide does not lyse and thus kill the bacteria by its antimicrobial activity. Functionally, bombinin H has antibacterial and hemolytic activity. The protein is Bombinin-like peptides 1 of Bombina variegata (Yellow-bellied toad).